The primary structure comprises 45 residues: uncharacterized protein (45 aa).

The helical transmembrane segment at 10 to 27 threads the bilayer; the sequence is LLYFVLFVDIYGIFTNNI.

The protein resides in the membrane. This is an uncharacterized protein from Dictyostelium discoideum (Social amoeba).